Consider the following 180-residue polypeptide: Large ribosomal subunit protein uL6 (180 aa).

The protein belongs to the universal ribosomal protein uL6 family. In terms of assembly, part of the 50S ribosomal subunit.

This protein binds to the 23S rRNA, and is important in its secondary structure. It is located near the subunit interface in the base of the L7/L12 stalk, and near the tRNA binding site of the peptidyltransferase center. This chain is Large ribosomal subunit protein uL6, found in Clostridium botulinum (strain Alaska E43 / Type E3).